A 459-amino-acid polypeptide reads, in one-letter code: ATP synthase subunit beta (459 aa).

Position 147–154 (147–154 (GGAGVGKT)) interacts with ATP.

This sequence belongs to the ATPase alpha/beta chains family. As to quaternary structure, F-type ATPases have 2 components, CF(1) - the catalytic core - and CF(0) - the membrane proton channel. CF(1) has five subunits: alpha(3), beta(3), gamma(1), delta(1), epsilon(1). CF(0) has three main subunits: a(1), b(2) and c(9-12). The alpha and beta chains form an alternating ring which encloses part of the gamma chain. CF(1) is attached to CF(0) by a central stalk formed by the gamma and epsilon chains, while a peripheral stalk is formed by the delta and b chains.

It localises to the cell inner membrane. It carries out the reaction ATP + H2O + 4 H(+)(in) = ADP + phosphate + 5 H(+)(out). Its function is as follows. Produces ATP from ADP in the presence of a proton gradient across the membrane. The catalytic sites are hosted primarily by the beta subunits. In Hydrogenovibrio crunogenus (strain DSM 25203 / XCL-2) (Thiomicrospira crunogena), this protein is ATP synthase subunit beta.